A 758-amino-acid polypeptide reads, in one-letter code: 5-methyltetrahydropteroyltriglutamate--homocysteine methyltransferase (758 aa).

Residues 16 to 19 (RELK) and Lys116 each bind 5-methyltetrahydropteroyltri-L-glutamate. L-homocysteine-binding positions include 436–438 (IGS) and Glu489. Residues 436 to 438 (IGS) and Glu489 each bind L-methionine. Residues 520–521 (RC) and Trp566 contribute to the 5-methyltetrahydropteroyltri-L-glutamate site. Asp604 lines the L-homocysteine pocket. An L-methionine-binding site is contributed by Asp604. Glu610 lines the 5-methyltetrahydropteroyltri-L-glutamate pocket. Zn(2+) contacts are provided by His646, Cys648, and Glu670. His699 serves as the catalytic Proton donor. Cys731 is a Zn(2+) binding site.

The protein belongs to the vitamin-B12 independent methionine synthase family. Zn(2+) serves as cofactor.

It carries out the reaction 5-methyltetrahydropteroyltri-L-glutamate + L-homocysteine = tetrahydropteroyltri-L-glutamate + L-methionine. Its pathway is amino-acid biosynthesis; L-methionine biosynthesis via de novo pathway; L-methionine from L-homocysteine (MetE route): step 1/1. Catalyzes the transfer of a methyl group from 5-methyltetrahydrofolate to homocysteine resulting in methionine formation. The chain is 5-methyltetrahydropteroyltriglutamate--homocysteine methyltransferase from Nitrosococcus oceani (strain ATCC 19707 / BCRC 17464 / JCM 30415 / NCIMB 11848 / C-107).